We begin with the raw amino-acid sequence, 156 residues long: 6,7-dimethyl-8-ribityllumazine synthase (156 aa).

5-amino-6-(D-ribitylamino)uracil contacts are provided by residues Phe-23, 57–59 (AFE), and 81–83 (TVI). 86 to 87 (ST) provides a ligand contact to (2S)-2-hydroxy-3-oxobutyl phosphate. His-89 acts as the Proton donor in catalysis. Phe-114 lines the 5-amino-6-(D-ribitylamino)uracil pocket. Residue Arg-128 participates in (2S)-2-hydroxy-3-oxobutyl phosphate binding.

It belongs to the DMRL synthase family. In terms of assembly, forms an icosahedral capsid composed of 60 subunits, arranged as a dodecamer of pentamers.

It carries out the reaction (2S)-2-hydroxy-3-oxobutyl phosphate + 5-amino-6-(D-ribitylamino)uracil = 6,7-dimethyl-8-(1-D-ribityl)lumazine + phosphate + 2 H2O + H(+). Its pathway is cofactor biosynthesis; riboflavin biosynthesis; riboflavin from 2-hydroxy-3-oxobutyl phosphate and 5-amino-6-(D-ribitylamino)uracil: step 1/2. Catalyzes the formation of 6,7-dimethyl-8-ribityllumazine by condensation of 5-amino-6-(D-ribitylamino)uracil with 3,4-dihydroxy-2-butanone 4-phosphate. This is the penultimate step in the biosynthesis of riboflavin. The chain is 6,7-dimethyl-8-ribityllumazine synthase from Shouchella clausii (strain KSM-K16) (Alkalihalobacillus clausii).